The primary structure comprises 201 residues: Imidazoleglycerol-phosphate dehydratase (201 aa).

Belongs to the imidazoleglycerol-phosphate dehydratase family.

It is found in the cytoplasm. It carries out the reaction D-erythro-1-(imidazol-4-yl)glycerol 3-phosphate = 3-(imidazol-4-yl)-2-oxopropyl phosphate + H2O. The protein operates within amino-acid biosynthesis; L-histidine biosynthesis; L-histidine from 5-phospho-alpha-D-ribose 1-diphosphate: step 6/9. The sequence is that of Imidazoleglycerol-phosphate dehydratase from Methanopyrus kandleri (strain AV19 / DSM 6324 / JCM 9639 / NBRC 100938).